We begin with the raw amino-acid sequence, 324 residues long: Glyoxylate/hydroxypyruvate reductase B (324 aa).

Residues arginine 237 and glutamate 266 contribute to the active site. Histidine 285 acts as the Proton donor in catalysis.

The protein belongs to the D-isomer specific 2-hydroxyacid dehydrogenase family. GhrB subfamily. In terms of assembly, homodimer.

The protein resides in the cytoplasm. It catalyses the reaction glycolate + NADP(+) = glyoxylate + NADPH + H(+). It carries out the reaction (R)-glycerate + NAD(+) = 3-hydroxypyruvate + NADH + H(+). The catalysed reaction is (R)-glycerate + NADP(+) = 3-hydroxypyruvate + NADPH + H(+). Functionally, catalyzes the NADPH-dependent reduction of glyoxylate and hydroxypyruvate into glycolate and glycerate, respectively. The polypeptide is Glyoxylate/hydroxypyruvate reductase B (Cronobacter sakazakii (strain ATCC BAA-894) (Enterobacter sakazakii)).